A 122-amino-acid polypeptide reads, in one-letter code: Glycine cleavage system H protein (122 aa).

A Lipoyl-binding domain is found at 19 to 101; it reads VVTVGITNYA…EKEGWLWKMT (83 aa). Lys60 bears the N6-lipoyllysine mark.

The protein belongs to the GcvH family. As to quaternary structure, the glycine cleavage system is composed of four proteins: P, T, L and H. (R)-lipoate is required as a cofactor.

Its function is as follows. The glycine cleavage system catalyzes the degradation of glycine. The H protein shuttles the methylamine group of glycine from the P protein to the T protein. In Bartonella quintana (strain Toulouse) (Rochalimaea quintana), this protein is Glycine cleavage system H protein.